Consider the following 85-residue polypeptide: Large ribosomal subunit protein bL31B (85 aa).

This sequence belongs to the bacterial ribosomal protein bL31 family. Type B subfamily. Part of the 50S ribosomal subunit.

The chain is Large ribosomal subunit protein bL31B from Pseudomonas entomophila (strain L48).